A 433-amino-acid chain; its full sequence is Serine--tRNA ligase (433 aa).

Residue 239-241 coordinates L-serine; sequence TAE. 270 to 272 serves as a coordination point for ATP; sequence RSE. An L-serine-binding site is contributed by E293. Residue 357-360 coordinates ATP; that stretch reads EISS. S393 is a binding site for L-serine.

It belongs to the class-II aminoacyl-tRNA synthetase family. Type-1 seryl-tRNA synthetase subfamily. In terms of assembly, homodimer. The tRNA molecule binds across the dimer.

It is found in the cytoplasm. The catalysed reaction is tRNA(Ser) + L-serine + ATP = L-seryl-tRNA(Ser) + AMP + diphosphate + H(+). It carries out the reaction tRNA(Sec) + L-serine + ATP = L-seryl-tRNA(Sec) + AMP + diphosphate + H(+). The protein operates within aminoacyl-tRNA biosynthesis; selenocysteinyl-tRNA(Sec) biosynthesis; L-seryl-tRNA(Sec) from L-serine and tRNA(Sec): step 1/1. In terms of biological role, catalyzes the attachment of serine to tRNA(Ser). Is also able to aminoacylate tRNA(Sec) with serine, to form the misacylated tRNA L-seryl-tRNA(Sec), which will be further converted into selenocysteinyl-tRNA(Sec). The sequence is that of Serine--tRNA ligase from Sorangium cellulosum (strain So ce56) (Polyangium cellulosum (strain So ce56)).